The chain runs to 544 residues: E3 ubiquitin-protein ligase makorin-3 (544 aa).

2 disordered regions span residues 1 to 46 and 117 to 144; these read MEES…VSSA and DLSG…KMAT. Composition is skewed to low complexity over residues 9 to 19 and 36 to 46; these read EAHAAAGAEAG and AAGASAGVSSA. 2 consecutive C3H1-type zinc fingers follow at residues 92–119 and 274–301; these read WTKQ…HDLS and PMPL…HGEI. Residues 302–329 form a makorin-type Cys-His region; sequence CDMCGQQALHPWDAAQQEAHRRACVEAH. Residues 347–401 form an RING-type zinc finger; that stretch reads CGICMEVVYEKADPSDRRFGILFSCNHTYCLRCIRRWRSATQFENRISKSCPQCR. A C3H1-type 3 zinc finger spans residues 430–459; the sequence is GMSQKACRYFAGGLGHCPFGEFCFYKHEYP.

As to expression, mainly expressed in mouse brain and reproductive system including testis and ovary. Ubiquitously detected at low levels throughout the entire embryo, but expression is highest in the ventricular layers of the brain.

The protein localises to the nucleus. The enzyme catalyses S-ubiquitinyl-[E2 ubiquitin-conjugating enzyme]-L-cysteine + [acceptor protein]-L-lysine = [E2 ubiquitin-conjugating enzyme]-L-cysteine + N(6)-ubiquitinyl-[acceptor protein]-L-lysine.. It functions in the pathway protein modification; protein ubiquitination. Functionally, E3 ubiquitin ligase catalyzing the covalent attachment of ubiquitin moieties onto substrate proteins. Acts as a key developmental timer that helps ensure puberty begins at the appropriate age, by inhibiting premature activation of the reproductive hormone cascade. Epigenetically regulates GNRH1 transcription by disrupting the binding of methyl-DNA binding protein 3/MBD3 to the promoter of GNRH1. Mechanistically, mediates the non-proteolytic ubiquitination of MBD3 at multiple sites with 'Lys27' ubiquitin linkages and thereby regulates the methylation status of the genome, including GNRH1 promoter. Modulates the stability and translation of GNRH1 mRNA by mediating the non-proteolytic ubiquitination of PABP family members PABPC1, PABPC3 and PABPC4 at multiple sites. Also participates in the maintenance of genomic and epigenomic stability by regulating the abundance of APEX2 via 'Lys-48'-linked ubiquitination. The polypeptide is E3 ubiquitin-protein ligase makorin-3 (Mkrn3) (Mus musculus (Mouse)).